The following is a 925-amino-acid chain: Leucine--tRNA ligase (925 aa).

The 'HIGH' region signature appears at 40-51; it reads PYPSGAGLHVGH. The short motif at 700–704 is the 'KMSKS' region element; the sequence is KMSKS. Lys-703 contacts ATP.

This sequence belongs to the class-I aminoacyl-tRNA synthetase family.

The protein resides in the cytoplasm. It carries out the reaction tRNA(Leu) + L-leucine + ATP = L-leucyl-tRNA(Leu) + AMP + diphosphate. In Porphyromonas gingivalis (strain ATCC 33277 / DSM 20709 / CIP 103683 / JCM 12257 / NCTC 11834 / 2561), this protein is Leucine--tRNA ligase.